The sequence spans 863 residues: Protein translocase subunit SecA (863 aa).

ATP is bound by residues Gln-88, 106 to 110, and Asp-496; that span reads GEGKT. Positions 818-842 are disordered; sequence EVKTEPVITKKKPARNEPCPCGSGK. Cys-836, Cys-838, Cys-847, and Cys-848 together coordinate Zn(2+).

This sequence belongs to the SecA family. Monomer and homodimer. Part of the essential Sec protein translocation apparatus which comprises SecA, SecYEG and auxiliary proteins SecDF-YajC and YidC. The cofactor is Zn(2+).

Its subcellular location is the cell inner membrane. It is found in the cytoplasm. The enzyme catalyses ATP + H2O + cellular proteinSide 1 = ADP + phosphate + cellular proteinSide 2.. Its function is as follows. Part of the Sec protein translocase complex. Interacts with the SecYEG preprotein conducting channel. Has a central role in coupling the hydrolysis of ATP to the transfer of proteins into and across the cell membrane, serving as an ATP-driven molecular motor driving the stepwise translocation of polypeptide chains across the membrane. This Nitratiruptor sp. (strain SB155-2) protein is Protein translocase subunit SecA.